The sequence spans 358 residues: Neutral protease 2 homolog MEP8 (358 aa).

An N-terminal signal peptide occupies residues 1–19 (MKLSSILLALAALVSPAFS). Positions 20–179 (YAISHLPRSE…EKAIKPVDKR (160 aa)) are excised as a propeptide. 2 disulfides stabilise this stretch: Cys-186-Cys-256 and Cys-263-Cys-281. Position 305 (His-305) interacts with Zn(2+). Residue Glu-306 is part of the active site. The Zn(2+) site is built by His-309 and Asp-320.

It belongs to the peptidase M35 family. It depends on Zn(2+) as a cofactor.

Its subcellular location is the secreted. It catalyses the reaction Preferential cleavage of bonds with hydrophobic residues in P1'. Also 3-Asn-|-Gln-4 and 8-Gly-|-Ser-9 bonds in insulin B chain.. Functionally, secreted metalloproteinase that allows assimilation of proteinaceous substrates. Shows high activities on basic nuclear substrates such as histone and protamine. May be involved in virulence. This is Neutral protease 2 homolog MEP8 (MEP8) from Coccidioides posadasii (strain C735) (Valley fever fungus).